We begin with the raw amino-acid sequence, 495 residues long: Glutamate--tRNA ligase 1 (495 aa).

The 'HIGH' region signature appears at 10–20 (PSPTGALHMGG). Residues 251 to 255 (KLSKR) carry the 'KMSKS' region motif. Lys254 provides a ligand contact to ATP.

It belongs to the class-I aminoacyl-tRNA synthetase family. Glutamate--tRNA ligase type 1 subfamily. Monomer.

It is found in the cytoplasm. It catalyses the reaction tRNA(Glu) + L-glutamate + ATP = L-glutamyl-tRNA(Glu) + AMP + diphosphate. In terms of biological role, catalyzes the attachment of glutamate to tRNA(Glu) in a two-step reaction: glutamate is first activated by ATP to form Glu-AMP and then transferred to the acceptor end of tRNA(Glu). This Syntrophomonas wolfei subsp. wolfei (strain DSM 2245B / Goettingen) protein is Glutamate--tRNA ligase 1.